The primary structure comprises 76 residues: Exodeoxyribonuclease 7 small subunit (76 aa).

It belongs to the XseB family. As to quaternary structure, heterooligomer composed of large and small subunits.

The protein resides in the cytoplasm. It carries out the reaction Exonucleolytic cleavage in either 5'- to 3'- or 3'- to 5'-direction to yield nucleoside 5'-phosphates.. Its function is as follows. Bidirectionally degrades single-stranded DNA into large acid-insoluble oligonucleotides, which are then degraded further into small acid-soluble oligonucleotides. The sequence is that of Exodeoxyribonuclease 7 small subunit from Arthrobacter sp. (strain FB24).